Consider the following 1128-residue polypeptide: Adipocyte enhancer-binding protein 1 (1128 aa).

A signal peptide spans 1–25 (MAAVRTASLLCGLLALLALCPEGSP). Positions 40–368 (GFLSEFETQS…PRKGEELEEE (329 aa)) are disordered. Over residues 77–109 (PRADAEAPPEKNKDKEKKGKKDKGPKAAKHLEG) the composition is skewed to basic and acidic residues. Positions 113–163 (PTKKPKEKPPKATKKPKEKPPKATKKPKEKPPKATKKPKEKPPKATKRPSA) are enriched in basic residues. 2 stretches are compositionally biased toward polar residues: residues 178–187 (RSLTSPSNPG) and 198–209 (TSLNTWQGQGEE). Basic residues predominate over residues 249-261 (RQKQPRPTPSRKR). 2 stretches are compositionally biased toward basic and acidic residues: residues 267–282 (PEEK…EVDP) and 327–363 (EELK…RKGE). An F5/8 type C domain is found at 375 to 532 (IKCPPIGMES…LCMRLEVLGC (158 aa)). A required for DNA-binding and interaction with NFKBIA region spans residues 382–547 (MESHRIEDNQ…YSYYAQNEVV (166 aa)). Interaction with MAPK1 and MAPK3 regions lie at residues 413–616 (AGAN…TAGM) and 998–1128 (DPSR…FGDF). A glycan (N-linked (GlcNAc...) asparagine) is linked at asparagine 520. Residues 547 to 977 (VTTDSLDFRH…TQCNFILARS (431 aa)) are interaction with PTEN. The Peptidase M14 domain maps to 555–896 (RHHSYKDMRQ…EALLTFMEQV (342 aa)). Residues 933 to 1128 (DYWRILNPGE…ETYTVNFGDF (196 aa)) form a required for transcriptional repression region. Residues 1027–1056 (LRRLNSTTGPATSPTPALTLPPSPTPGSTS) are disordered. Over residues 1030–1044 (LNSTTGPATSPTPAL) the composition is skewed to low complexity.

This sequence belongs to the peptidase M14 family. In terms of assembly, interacts with different types of collagen, including collagens I, III, and V. Interacts with GNG5, NFKBIA, MAPK1, MAPK3 and PTEN. May interact with calmodulin. Interaction with MAPK1 may stimulate DNA-binding. Binds to DNA in vitro. Post-translationally, phosphorylated by MAPK1 in vitro. As to expression, expressed in aorta.

The protein localises to the secreted. As a positive regulator of collagen fibrillogenesis, it is probably involved in the organization and remodeling of the extracellular matrix. May positively regulate MAP-kinase activity in adipocytes, leading to enhanced adipocyte proliferation and reduced adipocyte differentiation. May also positively regulate NF-kappa-B activity in macrophages by promoting the phosphorylation and subsequent degradation of I-kappa-B-alpha (NFKBIA), leading to enhanced macrophage inflammatory responsiveness. Can act as a transcriptional repressor. The chain is Adipocyte enhancer-binding protein 1 (Aebp1) from Rattus norvegicus (Rat).